A 438-amino-acid polypeptide reads, in one-letter code: Aspartate--tRNA(Asp/Asn) ligase (438 aa).

Glutamate 176 serves as a coordination point for L-aspartate. The interval 198–201 (QLYK) is aspartate. Position 220 (arginine 220) interacts with L-aspartate. ATP-binding positions include 220–222 (RAE), 228–230 (RHL), and glutamate 361. The Mg(2+) site is built by glutamate 361 and serine 364. Positions 364 and 368 each coordinate L-aspartate. 409–412 (GADR) contributes to the ATP binding site.

Belongs to the class-II aminoacyl-tRNA synthetase family. Type 2 subfamily. As to quaternary structure, homodimer. The cofactor is Mg(2+).

Its subcellular location is the cytoplasm. The catalysed reaction is tRNA(Asx) + L-aspartate + ATP = L-aspartyl-tRNA(Asx) + AMP + diphosphate. Its function is as follows. Aspartyl-tRNA synthetase with relaxed tRNA specificity since it is able to aspartylate not only its cognate tRNA(Asp) but also tRNA(Asn). Reaction proceeds in two steps: L-aspartate is first activated by ATP to form Asp-AMP and then transferred to the acceptor end of tRNA(Asp/Asn). The sequence is that of Aspartate--tRNA(Asp/Asn) ligase from Methanococcus maripaludis (strain DSM 14266 / JCM 13030 / NBRC 101832 / S2 / LL).